Here is a 103-residue protein sequence, read N- to C-terminus: Small ribosomal subunit protein uS14c (103 aa).

Residues 34 to 56 are disordered; the sequence is KVSPLSLSEKTKMQEKLQSLPRN.

The protein belongs to the universal ribosomal protein uS14 family. As to quaternary structure, part of the 30S ribosomal subunit.

It is found in the plastid. Its subcellular location is the chloroplast. In terms of biological role, binds 16S rRNA, required for the assembly of 30S particles. This Saccharum hybrid (Sugarcane) protein is Small ribosomal subunit protein uS14c.